Reading from the N-terminus, the 209-residue chain is Uracil phosphoribosyltransferase (209 aa).

Residues arginine 79, arginine 104, and 131–139 contribute to the 5-phospho-alpha-D-ribose 1-diphosphate site; that span reads DPMLATGNS. Uracil is bound by residues isoleucine 194 and 199-201; that span reads GDA. Aspartate 200 contacts 5-phospho-alpha-D-ribose 1-diphosphate.

The protein belongs to the UPRTase family. The cofactor is Mg(2+).

It carries out the reaction UMP + diphosphate = 5-phospho-alpha-D-ribose 1-diphosphate + uracil. It participates in pyrimidine metabolism; UMP biosynthesis via salvage pathway; UMP from uracil: step 1/1. With respect to regulation, allosterically activated by GTP. Functionally, catalyzes the conversion of uracil and 5-phospho-alpha-D-ribose 1-diphosphate (PRPP) to UMP and diphosphate. This Rhodococcus jostii (strain RHA1) protein is Uracil phosphoribosyltransferase.